A 72-amino-acid chain; its full sequence is Large ribosomal subunit protein uL29 (72 aa).

Belongs to the universal ribosomal protein uL29 family.

In Treponema pallidum (strain Nichols), this protein is Large ribosomal subunit protein uL29 (rpmC).